We begin with the raw amino-acid sequence, 136 residues long: Large ribosomal subunit protein uL22 (136 aa).

This sequence belongs to the universal ribosomal protein uL22 family. As to quaternary structure, part of the 50S ribosomal subunit.

This protein binds specifically to 23S rRNA; its binding is stimulated by other ribosomal proteins, e.g. L4, L17, and L20. It is important during the early stages of 50S assembly. It makes multiple contacts with different domains of the 23S rRNA in the assembled 50S subunit and ribosome. In terms of biological role, the globular domain of the protein is located near the polypeptide exit tunnel on the outside of the subunit, while an extended beta-hairpin is found that lines the wall of the exit tunnel in the center of the 70S ribosome. The chain is Large ribosomal subunit protein uL22 from Parabacteroides distasonis (strain ATCC 8503 / DSM 20701 / CIP 104284 / JCM 5825 / NCTC 11152).